Consider the following 599-residue polypeptide: Aspartate--tRNA ligase (599 aa).

Residue Glu180 coordinates L-aspartate. The aspartate stretch occupies residues Gln204–Lys207. Arg226 lines the L-aspartate pocket. ATP is bound by residues Arg226–Glu228 and Gln235. His454 contributes to the L-aspartate binding site. Glu488 contacts ATP. Residue Arg495 coordinates L-aspartate. Gly540–Arg543 is an ATP binding site.

Belongs to the class-II aminoacyl-tRNA synthetase family. Type 1 subfamily. In terms of assembly, homodimer.

It is found in the cytoplasm. It carries out the reaction tRNA(Asp) + L-aspartate + ATP = L-aspartyl-tRNA(Asp) + AMP + diphosphate. Its function is as follows. Catalyzes the attachment of L-aspartate to tRNA(Asp) in a two-step reaction: L-aspartate is first activated by ATP to form Asp-AMP and then transferred to the acceptor end of tRNA(Asp). The polypeptide is Aspartate--tRNA ligase (Clostridium botulinum (strain Alaska E43 / Type E3)).